The primary structure comprises 93 residues: uncharacterized protein (93 aa).

The interval 41-62 (RSANRIPTTSSTSTSGTIPTTT) is disordered. Low complexity predominate over residues 46 to 62 (IPTTSSTSTSGTIPTTT).

This is an uncharacterized protein from Dictyostelium discoideum (Social amoeba).